Here is a 122-residue protein sequence, read N- to C-terminus: Large ribosomal subunit protein uL14 (122 aa).

It belongs to the universal ribosomal protein uL14 family. As to quaternary structure, part of the 50S ribosomal subunit. Forms a cluster with proteins L3 and L19. In the 70S ribosome, L14 and L19 interact and together make contacts with the 16S rRNA in bridges B5 and B8.

Binds to 23S rRNA. Forms part of two intersubunit bridges in the 70S ribosome. In Dehalococcoides mccartyi (strain ATCC BAA-2100 / JCM 16839 / KCTC 5957 / BAV1), this protein is Large ribosomal subunit protein uL14.